Here is a 731-residue protein sequence, read N- to C-terminus: Putative pentatricopeptide repeat-containing protein At1g17630 (731 aa).

PPR repeat units lie at residues 88–118, 122–156, 157–191, 192–222, 223–257, 258–292, 293–327, 328–358, 359–393, 398–432, 433–467, 468–498, 499–533, 534–569, and 570–600; these read SGSLAANLISVYARLGLLLDARNVFETVSLV, DLRLWNSILKANVSHGLYENALELYRGMRQRGLTG, DGYILPLILRACRYLGRFGLCRAFHTQVIQIGLKE, NLHVVNELLTLYPKAGRMGDAYNLFVEMPVR, NRMSWNVMIKGFSQEYDCESAVKIFEWMQREEFKP, DEVTWTSVLSCHSQCGKFEDVLKYFHLMRMSGNAV, SGEALAVFFSVCAELEALSIAEKVHGYVIKGGFEE, YLPSRNALIHVYGKQGKVKDAEHLFRQIRNK, GIESWNSLITSFVDAGKLDEALSLFSELEEMNHVC, NVVTWTSVIKGCNVQGRGDDSLEYFRQMQFSKVLA, NSVTICCILSICAELPALNLGREIHGHVIRTSMSE, NILVQNALVNMYAKCGLLSEGSLVFEAIRDK, DLISWNSIIKGYGMHGFAEKALSMFDRMISSGFHP, DGIALVAVLSACSHAGLVEKGREIFYSMSKRFGLEP, and QQEHYACIVDLLGRVGFLKEASEIVKNMPME. Residues 605 to 680 form a type E motif region; that stretch reads VLGALLNSCR…VSGSSWIEVK (76 aa). Residues 681 to 711 form a type E(+) motif region; it reads KKKYKFSSGSIVQSEFETIYPVLEDLVSHML.

Belongs to the PPR family. PCMP-E subfamily.

In Arabidopsis thaliana (Mouse-ear cress), this protein is Putative pentatricopeptide repeat-containing protein At1g17630 (PCMP-E72).